The primary structure comprises 595 residues: Indole-3-acetic acid-amido synthetase GH3.15 (595 aa).

Residues 97–98 (SS), Thr-302, and 325–330 (FYGSSE) contribute to the ATP site. Residues Phe-325 and Phe-332 each contribute to the substrate site. ATP is bound by residues Tyr-348 and Asp-408.

It belongs to the IAA-amido conjugating enzyme family. Expressed in seedlings, roots, and parts of the siliques.

It carries out the reaction (indol-3-yl)butanoate + L-cysteine + ATP = (indol-3-yl)butanoyl-L-cysteine + AMP + diphosphate + H(+). It catalyses the reaction (indol-3-yl)butanoate + L-glutamine + ATP = (indol-3-yl)butanoyl-L-glutamine + AMP + diphosphate + H(+). The catalysed reaction is 4-(2,4-dichlorophenoxy)butanoate + L-glutamine + ATP = 4-(2,4-dichlorophenoxy)butanoyl-L-glutamine + AMP + diphosphate + H(+). Its function is as follows. Indole-3-acetic acid-amido (IAA) synthetase that catalyzes the conjugation of amino acids to auxin specifically using the auxin precursor indole-3-butyric acid (IBA) and glutamine and, possibly, cysteine as substrates. Displays high catalytic activity with the auxinic phenoxyalkanoic acid herbicides 4-(2,4-dichlorophenoxy)butyric acid (2,4-DB) and to some extent 2,4-dichlorophenoxylacetic acid (2,4-D) as substrates, thus conferring resistance to herbicides. This chain is Indole-3-acetic acid-amido synthetase GH3.15, found in Arabidopsis thaliana (Mouse-ear cress).